The sequence spans 109 residues: Tyrosine-protein phosphatase 6 (109 aa).

Positions 1 to 109 (YNINVIVMVC…SEDETTPLCV (109 aa)) constitute a Tyrosine-protein phosphatase domain. Residue Asp-76 coordinates substrate.

This sequence belongs to the protein-tyrosine phosphatase family.

It catalyses the reaction O-phospho-L-tyrosyl-[protein] + H2O = L-tyrosyl-[protein] + phosphate. This is Tyrosine-protein phosphatase 6 (STY-6) from Styela plicata (Wrinkled sea squirt).